The chain runs to 52 residues: UPF0391 membrane protein Avin_10980 (52 aa).

2 helical membrane-spanning segments follow: residues 4-24 (WSII…GGIA) and 29-49 (GIAK…LLFG).

It belongs to the UPF0391 family.

It localises to the cell membrane. The polypeptide is UPF0391 membrane protein Avin_10980 (Azotobacter vinelandii (strain DJ / ATCC BAA-1303)).